Reading from the N-terminus, the 361-residue chain is Putative agmatine deiminase (361 aa).

Residue cysteine 354 is the Amidino-cysteine intermediate of the active site.

Belongs to the agmatine deiminase family.

The enzyme catalyses agmatine + H2O = N-carbamoylputrescine + NH4(+). The chain is Putative agmatine deiminase from Streptococcus pneumoniae (strain Hungary19A-6).